We begin with the raw amino-acid sequence, 593 residues long: Arginine--tRNA ligase (593 aa).

Residues 123–133 (PNVAKPMHVGH) carry the 'HIGH' region motif.

It belongs to the class-I aminoacyl-tRNA synthetase family. As to quaternary structure, monomer.

It is found in the cytoplasm. The catalysed reaction is tRNA(Arg) + L-arginine + ATP = L-arginyl-tRNA(Arg) + AMP + diphosphate. The sequence is that of Arginine--tRNA ligase from Phenylobacterium zucineum (strain HLK1).